The following is a 124-amino-acid chain: uncharacterized protein (124 aa).

A helical transmembrane segment spans residues alanine 2–valine 22. The segment at asparagine 24–lysine 124 is disordered. Basic and acidic residues-rich tracts occupy residues glutamate 30–glutamate 58, aspartate 67–tyrosine 81, and lysine 89–arginine 113.

It localises to the membrane. This is an uncharacterized protein from Bacillus subtilis (strain 168).